A 423-amino-acid chain; its full sequence is L-cysteine:1D-myo-inositol 2-amino-2-deoxy-alpha-D-glucopyranoside ligase (423 aa).

C43 serves as a coordination point for Zn(2+). Residues 43-46 (CGIT), T58, and 81-83 (NVT) contribute to the L-cysteinyl-5'-AMP site. The 'HIGH' region signature appears at 45-55 (ITPYDATHMGH). The short motif at 199–204 (ERGGDP) is the 'ERGGDP' region element. W240 contacts L-cysteinyl-5'-AMP. C244 contributes to the Zn(2+) binding site. 262–264 (GSD) lines the L-cysteinyl-5'-AMP pocket. H269 is a binding site for Zn(2+). V295 contributes to the L-cysteinyl-5'-AMP binding site. The short motif at 301–305 (KMSKS) is the 'KMSKS' region element.

This sequence belongs to the class-I aminoacyl-tRNA synthetase family. MshC subfamily. Monomer. Zn(2+) serves as cofactor.

It catalyses the reaction 1D-myo-inositol 2-amino-2-deoxy-alpha-D-glucopyranoside + L-cysteine + ATP = 1D-myo-inositol 2-(L-cysteinylamino)-2-deoxy-alpha-D-glucopyranoside + AMP + diphosphate + H(+). Functionally, catalyzes the ATP-dependent condensation of GlcN-Ins and L-cysteine to form L-Cys-GlcN-Ins. The protein is L-cysteine:1D-myo-inositol 2-amino-2-deoxy-alpha-D-glucopyranoside ligase of Renibacterium salmoninarum (strain ATCC 33209 / DSM 20767 / JCM 11484 / NBRC 15589 / NCIMB 2235).